The chain runs to 244 residues: uncharacterized protein (244 aa).

Residues 1–17 form the signal peptide; that stretch reads MVLHVITALLSIGLCYG.

In terms of tissue distribution, component of the acid-soluble and acid-insoluble organic matrix of prismatic shell layers (at protein level).

The protein localises to the secreted. This is an uncharacterized protein from Haliotis asinina (Donkey's ear abalone).